Here is a 128-residue protein sequence, read N- to C-terminus: Probable 4-amino-4-deoxy-L-arabinose-phosphoundecaprenol flippase subunit ArnF (128 aa).

The Cytoplasmic segment spans residues 1–2; that stretch reads MG. A helical transmembrane segment spans residues 3-23; the sequence is LMWGLFSVIIASAAQLSMGFA. Residues 24 to 35 lie on the Periplasmic side of the membrane; the sequence is ASHLPPMTHLWD. Residues 36 to 56 form a helical membrane-spanning segment; that stretch reads FIAALLAFGLDARILLLGLLG. The Cytoplasmic portion of the chain corresponds to 57-76; the sequence is YLLSVFCWYKTLHKLALSKA. The chain crosses the membrane as a helical span at residues 77–97; it reads YALLSMSYVLVWIASMVLPGW. Residues 98-100 are Periplasmic-facing; that stretch reads EGT. A helical membrane pass occupies residues 101-121; it reads FSLKALLGVACIMSGLMLIFL. Over 122-128 the chain is Cytoplasmic; that stretch reads PTTKQRY.

The protein belongs to the ArnF family. In terms of assembly, heterodimer of ArnE and ArnF.

The protein localises to the cell inner membrane. It participates in bacterial outer membrane biogenesis; lipopolysaccharide biosynthesis. Its function is as follows. Translocates 4-amino-4-deoxy-L-arabinose-phosphoundecaprenol (alpha-L-Ara4N-phosphoundecaprenol) from the cytoplasmic to the periplasmic side of the inner membrane. In Escherichia coli O45:K1 (strain S88 / ExPEC), this protein is Probable 4-amino-4-deoxy-L-arabinose-phosphoundecaprenol flippase subunit ArnF.